A 348-amino-acid chain; its full sequence is Ferredoxin--NADP reductase 1 (348 aa).

FAD is bound by residues Glu36, Lys44, Tyr48, Ile88, Pro123, Asp285, and Ser326. The tract at residues 329–348 (EKFKKKNEQLKQEKQAQLMN) is disordered.

This sequence belongs to the ferredoxin--NADP reductase type 2 family. As to quaternary structure, homodimer. It depends on FAD as a cofactor.

It catalyses the reaction 2 reduced [2Fe-2S]-[ferredoxin] + NADP(+) + H(+) = 2 oxidized [2Fe-2S]-[ferredoxin] + NADPH. This Shouchella clausii (strain KSM-K16) (Alkalihalobacillus clausii) protein is Ferredoxin--NADP reductase 1.